A 932-amino-acid chain; its full sequence is ER degradation-enhancing alpha-mannosidase-like protein 3 (932 aa).

The first 41 residues, 1–41, serve as a signal peptide directing secretion; sequence MSEAGGRGCGSPVPQRARWRLVAATAAFCLVSATSVWTAGA. A glycan (N-linked (GlcNAc...) asparagine) is linked at N118. E146 functions as the Proton donor in the catalytic mechanism. Residue N195 is glycosylated (N-linked (GlcNAc...) asparagine). D293 is a catalytic residue. The Proton donor role is filled by E387. Residue E405 is part of the active site. Residue T491 coordinates Ca(2+). N504 and N511 each carry an N-linked (GlcNAc...) asparagine glycan. In terms of domain architecture, PA spans 674–779; it reads LSKHKETRGF…KEGSIILDAI (106 aa). The segment covering 790–799 has biased composition (basic and acidic residues); it reads SDKAKDRDPE. Positions 790–908 are disordered; that stretch reads SDKAKDRDPE…PNVSWGKKVQ (119 aa). N-linked (GlcNAc...) asparagine glycans are attached at residues N810 and N814. Over residues 812 to 825 the composition is skewed to low complexity; it reads SQNQSGEQISSSSQ. Polar residues predominate over residues 856–890; that stretch reads ASISPSEQTSNPTENHETTNLNGECTDLDNQLQEQ. The N-linked (GlcNAc...) asparagine glycan is linked to N900. The short motif at 929-932 is the Prevents secretion from ER element; that stretch reads KDEL.

It belongs to the glycosyl hydrolase 47 family. The cofactor is Ca(2+).

It is found in the endoplasmic reticulum lumen. It carries out the reaction N(4)-(alpha-D-Man-(1-&gt;2)-alpha-D-Man-(1-&gt;2)-alpha-D-Man-(1-&gt;3)-[alpha-D-Man-(1-&gt;2)-alpha-D-Man-(1-&gt;3)-[alpha-D-Man-(1-&gt;2)-alpha-D-Man-(1-&gt;6)]-alpha-D-Man-(1-&gt;6)]-beta-D-Man-(1-&gt;4)-beta-D-GlcNAc-(1-&gt;4)-beta-D-GlcNAc)-L-asparaginyl-[protein] (N-glucan mannose isomer 9A1,2,3B1,2,3) + 4 H2O = N(4)-(alpha-D-Man-(1-&gt;3)-[alpha-D-Man-(1-&gt;3)-[alpha-D-Man-(1-&gt;6)]-alpha-D-Man-(1-&gt;6)]-beta-D-Man-(1-&gt;4)-beta-D-GlcNAc-(1-&gt;4)-beta-D-GlcNAc)-L-asparaginyl-[protein] (N-glucan mannose isomer 5A1,2) + 4 beta-D-mannose. The catalysed reaction is N(4)-(alpha-D-Man-(1-&gt;2)-alpha-D-Man-(1-&gt;2)-alpha-D-Man-(1-&gt;3)-[alpha-D-Man-(1-&gt;3)-[alpha-D-Man-(1-&gt;2)-alpha-D-Man-(1-&gt;6)]-alpha-D-Man-(1-&gt;6)]-beta-D-Man-(1-&gt;4)-beta-D-GlcNAc-(1-&gt;4)-beta-D-GlcNAc)-L-asparaginyl-[protein] (N-glucan mannose isomer 8A1,2,3B1,3) + 3 H2O = N(4)-(alpha-D-Man-(1-&gt;3)-[alpha-D-Man-(1-&gt;3)-[alpha-D-Man-(1-&gt;6)]-alpha-D-Man-(1-&gt;6)]-beta-D-Man-(1-&gt;4)-beta-D-GlcNAc-(1-&gt;4)-beta-D-GlcNAc)-L-asparaginyl-[protein] (N-glucan mannose isomer 5A1,2) + 3 beta-D-mannose. It functions in the pathway protein modification; protein glycosylation. In terms of biological role, involved in endoplasmic reticulum-associated degradation (ERAD). Accelerates the glycoprotein ERAD by proteasomes, by catalyzing mannose trimming from Man8GlcNAc2 to Man7GlcNAc2 in the N-glycans. May also participate in mannose trimming from all glycoproteins and not just misfolded ones targeted to ERAD. May have alpha 1,2-mannosidase activity. The protein is ER degradation-enhancing alpha-mannosidase-like protein 3 (EDEM3) of Homo sapiens (Human).